The chain runs to 297 residues: Probable GTP 3',8-cyclase (297 aa).

Residues 4–220 (EFGREIRSFR…VVTRKFMQNR (217 aa)) enclose the Radical SAM core domain. Arg13 is a binding site for GTP. Residues Cys20 and Cys24 each contribute to the [4Fe-4S] cluster site. Position 26 (Tyr26) interacts with S-adenosyl-L-methionine. Cys27 contacts [4Fe-4S] cluster. Lys61 lines the GTP pocket. Gly65 contributes to the S-adenosyl-L-methionine binding site. Position 91 (Thr91) interacts with GTP. S-adenosyl-L-methionine is bound at residue Ser115. Residue Lys151 participates in GTP binding. 2 residues coordinate [4Fe-4S] cluster: Cys242 and Cys245. 247–249 (RIR) provides a ligand contact to GTP. Position 259 (Cys259) interacts with [4Fe-4S] cluster.

It belongs to the radical SAM superfamily. MoaA family. The cofactor is [4Fe-4S] cluster.

The catalysed reaction is GTP + AH2 + S-adenosyl-L-methionine = (8S)-3',8-cyclo-7,8-dihydroguanosine 5'-triphosphate + 5'-deoxyadenosine + L-methionine + A + H(+). It functions in the pathway cofactor biosynthesis; molybdopterin biosynthesis. Functionally, catalyzes the cyclization of GTP to (8S)-3',8-cyclo-7,8-dihydroguanosine 5'-triphosphate. The chain is Probable GTP 3',8-cyclase from Methanococcus vannielii (strain ATCC 35089 / DSM 1224 / JCM 13029 / OCM 148 / SB).